We begin with the raw amino-acid sequence, 226 residues long: Exosome complex component Rrp4 (226 aa).

The 75-residue stretch at 61-135 folds into the S1 motif domain; sequence NDLVIGKVNS…RDPLVSISDR (75 aa). The region spanning 141 to 200 is the KH domain; that stretch reads DSGVLMEISPSKVPRLIGKKGSMIQMIEEATDAAVTIGQNGWVVVSCESPEGLLKAKKAI.

It belongs to the RRP4 family. Component of the archaeal exosome complex. Forms a trimer of Rrp4 and/or Csl4 subunits. The trimer associates with a hexameric ring-like arrangement composed of 3 Rrp41-Rrp42 heterodimers.

It is found in the cytoplasm. Its function is as follows. Non-catalytic component of the exosome, which is a complex involved in RNA degradation. Increases the RNA binding and the efficiency of RNA degradation. Confers strong poly(A) specificity to the exosome. The chain is Exosome complex component Rrp4 from Nitrosopumilus maritimus (strain SCM1).